Here is a 90-residue protein sequence, read N- to C-terminus: Large ribosomal subunit protein bL27 (90 aa).

The segment at 1–22 (MAHKKAGGSSRNGRDSESKRLG) is disordered.

Belongs to the bacterial ribosomal protein bL27 family.

This chain is Large ribosomal subunit protein bL27, found in Allorhizobium ampelinum (strain ATCC BAA-846 / DSM 112012 / S4) (Agrobacterium vitis (strain S4)).